The primary structure comprises 168 residues: Xanthine-guanine phosphoribosyltransferase (168 aa).

5-phospho-alpha-D-ribose 1-diphosphate is bound by residues 43-44 (RG) and 102-110 (DDLVDTGAT). Aspartate 103 is a binding site for Mg(2+). Guanine is bound by residues aspartate 106 and isoleucine 149. Residues aspartate 106 and isoleucine 149 each coordinate xanthine. GMP-binding positions include 106–110 (DTGAT) and 148–149 (WI).

The protein belongs to the purine/pyrimidine phosphoribosyltransferase family. XGPT subfamily. As to quaternary structure, homotetramer. Mg(2+) is required as a cofactor.

The protein resides in the cell inner membrane. It carries out the reaction GMP + diphosphate = guanine + 5-phospho-alpha-D-ribose 1-diphosphate. The catalysed reaction is XMP + diphosphate = xanthine + 5-phospho-alpha-D-ribose 1-diphosphate. The enzyme catalyses IMP + diphosphate = hypoxanthine + 5-phospho-alpha-D-ribose 1-diphosphate. Its pathway is purine metabolism; GMP biosynthesis via salvage pathway; GMP from guanine: step 1/1. It participates in purine metabolism; XMP biosynthesis via salvage pathway; XMP from xanthine: step 1/1. Purine salvage pathway enzyme that catalyzes the transfer of the ribosyl-5-phosphate group from 5-phospho-alpha-D-ribose 1-diphosphate (PRPP) to the N9 position of the 6-oxopurines guanine and xanthine to form the corresponding ribonucleotides GMP (guanosine 5'-monophosphate) and XMP (xanthosine 5'-monophosphate), with the release of PPi. To a lesser extent, also acts on hypoxanthine. The protein is Xanthine-guanine phosphoribosyltransferase of Nitrobacter hamburgensis (strain DSM 10229 / NCIMB 13809 / X14).